The sequence spans 550 residues: Gamma-aminobutyric acid receptor subunit beta (550 aa).

The first 24 residues, 1 to 24, serve as a signal peptide directing secretion; the sequence is MRRSKTRRIFHVSITLLLVSTIFC. The Extracellular segment spans residues 25–264; the sequence is QNGTKPHNNS…FQLRRSVGYF (240 aa). 6 N-linked (GlcNAc...) asparagine glycosylation sites follow: Asn-26, Asn-32, Asn-33, Asn-45, Asn-53, and Asn-193. Residues Cys-180 and Cys-194 are joined by a disulfide bond. 3 helical membrane passes run 265–285, 292–311, and 324–344; these read IFQT…SFWI, ARVA…STGV, and IDIY…EYAA. At 345 to 527 the chain is on the cytoplasmic side; that stretch reads VNYSYWGRER…DVNLIDKYSR (183 aa). The interval 405-465 is disordered; it reads AMSTSNTAAQ…TTSLKGARPH (61 aa). The span at 406 to 421 shows a compositional bias: polar residues; that stretch reads MSTSNTAAQNNNFEST. The helical transmembrane segment at 528-548 threads the bilayer; sequence VVFPVCFIVFNLFYWSYYMMV.

Belongs to the ligand-gated ion channel (TC 1.A.9) family. Gamma-aminobutyric acid receptor (TC 1.A.9.5) subfamily.

The protein resides in the postsynaptic cell membrane. It is found in the cell membrane. Its function is as follows. GABA, an inhibitory neurotransmitter, mediates neuronal inhibition by binding to the GABA receptor and opening an integral chloride channel. This Caenorhabditis elegans protein is Gamma-aminobutyric acid receptor subunit beta (gab-1).